The primary structure comprises 414 residues: Histidine--tRNA ligase (414 aa).

This sequence belongs to the class-II aminoacyl-tRNA synthetase family. In terms of assembly, homodimer.

It is found in the cytoplasm. It carries out the reaction tRNA(His) + L-histidine + ATP = L-histidyl-tRNA(His) + AMP + diphosphate + H(+). The polypeptide is Histidine--tRNA ligase (Ehrlichia ruminantium (strain Gardel)).